A 2626-amino-acid chain; its full sequence is Unconventional myosin-IXa (2626 aa).

The Ras-associating domain maps to 14–112 (NEHTLRIYPG…YRFLLREKNL (99 aa)). The 872-residue stretch at 146 to 1017 (KDFDDLCSLP…ERQHLQDLLH (872 aa)) folds into the Myosin motor domain. Residues 175-195 (IYTYVGSILIAINPFKFLPIY) traverse the membrane as a helical segment. 239-246 (GESGSGKT) lines the ATP pocket. The residue at position 755 (S755) is a Phosphoserine. Residues 908–919 (QAEPYFVKCIRS) form an actin-binding region. IQ domains follow at residues 1021-1041 (LRRI…QQFL), 1043-1072 (LRQA…EKDA), 1075-1104 (MASA…AAVI), 1116-1145 (RHRA…KIIL), and 1139-1168 (QRNK…ERLK). Residues 1022-1163 (RRIILLQRWF…RARQRYKALK (142 aa)) form a neck or regulatory domain region. The interval 1164–2589 (EERLKETKLE…LKNVKNSPQK (1426 aa)) is tail. A compositionally biased stretch (basic and acidic residues) spans 1221-1240 (RESSMDFSKESPDKQQERGR). A disordered region spans residues 1221–1276 (RESSMDFSKESPDKQQERGRSQSGTDLQGDVIVRQRPKSLEDLHQKKVGRAKRESR). S1243 is subject to Phosphoserine. Residue T1245 is modified to Phosphothreonine. Residue S1259 is modified to Phosphoserine. Positions 1265-1292 (QKKVGRAKRESRRMRELEQAIFSLELLK) form a coiled coil. Over residues 1266–1276 (KKVGRAKRESR) the composition is skewed to basic residues. Phosphoserine is present on residues S1300 and S1318. The segment covering 1360–1375 (PSTFTNPKFDSQNNAL) has biased composition (polar residues). The tract at residues 1360–1397 (PSTFTNPKFDSQNNALSASSETSSTFSGKGASSDSEHL) is disordered. Residues 1376-1386 (SASSETSSTFS) are compositionally biased toward low complexity. A coiled-coil region spans residues 1493 to 1540 (TVLKKLEKLNIEKEKRQKQLQQQNEKEMMEQIRQQTDILEKERKAFKT). Disordered regions lie at residues 1562 to 1602 (VERP…PPKD), 1618 to 1673 (SRTV…SRPI), 1689 to 1726 (GNPQ…RMAR), 1765 to 1784 (SELG…SEMT), and 1872 to 1907 (QYHP…KRGV). Composition is skewed to basic and acidic residues over residues 1620-1632 (TVKE…RMGT) and 1659-1669 (HRSDDPSREGS). A compositionally biased stretch (basic residues) spans 1716 to 1726 (PAHKKKARMAR). Residues 1772–1784 (SLGQASHSDSEMT) are compositionally biased toward polar residues. Over residues 1887-1899 (CRKEFKENKEPSP) the composition is skewed to basic and acidic residues. A Phosphoserine modification is found at S2016. Residues 2067-2116 (GHMFKATQYSIPTYCEYCSSLIWIMDRASVCKLCKYACHKKCCLKTTAKC) form a Phorbol-ester/DAG-type zinc finger. One can recognise a Rho-GAP domain in the interval 2131-2319 (VELSRLTSED…LIVVEQMNKY (189 aa)). The disordered stretch occupies residues 2365-2385 (SGKGRLHRGSHPNPSSPVIVR). Phosphoserine is present on S2380. A coiled-coil region spans residues 2408–2444 (TDQQQAAMQQEEKVLTEQIENLQKEKEELTFEMLVLE). The disordered stretch occupies residues 2449-2527 (DDEALESEAS…NTTSSHGTRK (79 aa)). Low complexity predominate over residues 2504 to 2522 (SLDSVSSSVSSCLSNTTSS). Phosphoserine is present on S2542. A disordered region spans residues 2552–2614 (PLGQAKSLED…TVDSDCSSTQ (63 aa)).

This sequence belongs to the TRAFAC class myosin-kinesin ATPase superfamily. Myosin family. Phosphorylated by ALPK1 following monosodium urate monohydrate (MSU)-induced inflammation. Expressed at high levels in brain, followed by testis and spleen. Expressed at very low levels, in kidney. Detected abundantly in brain and testis and at lower levels in adrenal gland, kidney, lung and spleen (at protein level). In adrenal gland it is mostly found in the medulla but not in the cortex. In brain, it is found in the cerebellum and the CA2-CA3 regions of the hippocampus.

The protein localises to the membrane. Its subcellular location is the cytoplasm. The protein resides in the synapse. It is found in the cell projection. It localises to the growth cone. In terms of biological role, myosins are actin-based motor molecules with ATPase activity. Unconventional myosins serve in intracellular movements. Regulates Rho by stimulating it's GTPase activity in neurons. Required for the regulation of neurite branching and motor neuron axon guidance. This chain is Unconventional myosin-IXa (Myo9a), found in Rattus norvegicus (Rat).